The sequence spans 337 residues: ATP-dependent 6-phosphofructokinase (337 aa).

Gly11 is an ATP binding site. Residue Arg21–Arg25 coordinates ADP. ATP-binding positions include Arg72–Tyr73 and Gly102–Ser105. A Mg(2+)-binding site is contributed by Asp103. Thr125 to Asp127 is a binding site for substrate. The Proton acceptor role is filled by Asp127. An ADP-binding site is contributed by Arg154. Substrate-binding positions include Arg162 and Met169–Arg171. Residues Gly185–Asp187, Lys212, and Lys214–His216 contribute to the ADP site. Residues Glu223, Arg245, and His251 to Arg254 each bind substrate.

The protein belongs to the phosphofructokinase type A (PFKA) family. ATP-dependent PFK group I subfamily. Prokaryotic clade 'B1' sub-subfamily. In terms of assembly, homotetramer. The cofactor is Mg(2+).

It is found in the cytoplasm. The enzyme catalyses beta-D-fructose 6-phosphate + ATP = beta-D-fructose 1,6-bisphosphate + ADP + H(+). The protein operates within carbohydrate degradation; glycolysis; D-glyceraldehyde 3-phosphate and glycerone phosphate from D-glucose: step 3/4. Allosterically activated by ADP and other diphosphonucleosides, and allosterically inhibited by phosphoenolpyruvate. Catalyzes the phosphorylation of D-fructose 6-phosphate to fructose 1,6-bisphosphate by ATP, the first committing step of glycolysis. In Streptococcus pyogenes serotype M1, this protein is ATP-dependent 6-phosphofructokinase.